The primary structure comprises 171 residues: uncharacterized protein (171 aa).

To M.jannaschii MJ0417.

This is an uncharacterized protein from Methanocaldococcus jannaschii (strain ATCC 43067 / DSM 2661 / JAL-1 / JCM 10045 / NBRC 100440) (Methanococcus jannaschii).